The following is a 610-amino-acid chain: Zinc metalloproteinase-disintegrin-like brevilysin H6 (610 aa).

The N-terminal stretch at 1-20 is a signal peptide; the sequence is MIQVLLVTICLAAFPYQGSS. The propeptide occupies 21–191; that stretch reads IILESGNVND…ASQLNLTPEQ (171 aa). Gln-192 carries the pyrrolidone carboxylic acid modification. In terms of domain architecture, Peptidase M12B spans 198 to 394; sequence RFVELVLVAD…HNPECIVNEP (197 aa). Residues Glu-201 and Asp-285 each contribute to the Ca(2+) site. 4 cysteine pairs are disulfide-bonded: Cys-309–Cys-389, Cys-349–Cys-373, Cys-351–Cys-356, and Cys-373–Cys-378. His-334 provides a ligand contact to Zn(2+). Glu-335 is an active-site residue. Residues His-338 and His-344 each contribute to the Zn(2+) site. The N-linked (GlcNAc...) asparagine glycan is linked to Asn-372. Ca(2+)-binding residues include Cys-389, Asn-392, Val-404, Asn-407, Leu-409, Glu-411, Glu-414, and Asp-417. A Disintegrin domain is found at 402–488; that stretch reads PPVCGNELLE…ECPADVFHKN (87 aa). 22 disulfide bridges follow: Cys-405–Cys-424, Cys-405–Cys-434, Cys-416–Cys-429, Cys-416–Cys-434, Cys-418–Cys-424, Cys-428–Cys-451, Cys-442–Cys-448, Cys-447–Cys-473, Cys-460–Cys-480, Cys-467–Cys-492, Cys-467–Cys-499, Cys-492–Cys-504, Cys-499–Cys-504, Cys-511–Cys-526, Cys-511–Cys-561, Cys-526–Cys-572, Cys-539–Cys-549, Cys-549–Cys-556, Cys-556–Cys-598, Cys-561–Cys-572, Cys-592–Cys-603, and Cys-598–Cys-603. Residues 466 to 468 carry the D/ECD-tripeptide motif; that stretch reads ECD. Residues Asp-468, Pro-469, Glu-471, Asp-483, and Val-484 each coordinate Ca(2+).

The protein belongs to the venom metalloproteinase (M12B) family. P-III subfamily. P-IIIb sub-subfamily. Monomer. It depends on Zn(2+) as a cofactor. In the absence of calcium ions, is autocatalytically degraded giving 29 (p29K) and 45 kDa (p45K) fragments. In presence of calcium ions, the p45K is not detected. In terms of tissue distribution, expressed by the venom gland.

It localises to the secreted. Inhibited by chelating agents. Calcium ions enhance its activity, they also suppress autoproteolysis, and contribute to the stability of the enzyme against pH, heating, urea and cysteine. Functionally, shows weak hemorrhagic activity. Rapidly degrades the alpha-chain of fibrinogen (FGA). This Gloydius brevicauda (Korean slamosa snake) protein is Zinc metalloproteinase-disintegrin-like brevilysin H6.